Consider the following 701-residue polypeptide: Pre-mRNA-splicing factor CLF1 (701 aa).

HAT repeat units lie at residues serine 43–glutamate 75, histidine 78–serine 110, lysine 112–methionine 144, lysine 146–arginine 177, glutamate 179–glutamate 210, aspartate 214–serine 253, glutamate 266–asparagine 299, serine 309–asparagine 341, serine 343–tryptophan 378, asparagine 388–arginine 424, methionine 545–serine 576, and serine 601–serine 642.

It belongs to the crooked-neck family. Associated with the spliceosome.

It is found in the nucleus. Involved in pre-mRNA splicing and cell cycle progression. Required for the spliceosome assembly and initiation of the DNA replication. This Candida albicans (strain SC5314 / ATCC MYA-2876) (Yeast) protein is Pre-mRNA-splicing factor CLF1 (CLF1).